The sequence spans 229 residues: Large ribosomal subunit protein uL1 (229 aa).

This sequence belongs to the universal ribosomal protein uL1 family. Part of the 50S ribosomal subunit.

Binds directly to 23S rRNA. The L1 stalk is quite mobile in the ribosome, and is involved in E site tRNA release. In terms of biological role, protein L1 is also a translational repressor protein, it controls the translation of the L11 operon by binding to its mRNA. The sequence is that of Large ribosomal subunit protein uL1 from Streptococcus pyogenes serotype M1.